Consider the following 123-residue polypeptide: Defensin beta 118 (123 aa).

The N-terminal stretch at methionine 1–proline 19 is a signal peptide. Cystine bridges form between cysteine 27/cysteine 54, cysteine 34/cysteine 48, and cysteine 38/cysteine 55. A propeptide spanning residues valine 65–serine 123 is cleaved from the precursor. Residues lysine 100–arginine 110 are compositionally biased toward basic and acidic residues. The interval lysine 100 to serine 123 is disordered. Residues threonine 112–serine 123 are compositionally biased toward polar residues.

This sequence belongs to the beta-defensin family. In terms of processing, the three-dimensional structure formed by the three intramolecular disulfide bridges is indispensable for antimicrobial activity.

The protein localises to the secreted. Host defense peptide that exhibits antimicrobial activity against both Gram-negative bacteria, such as E.coli and S.typhimurium, and Gram-positive bacteria, such as S.aureus and B.subtilis. Inhibits cell adhesion of E.coli on intestinal epithelial enterocytes. Causes rapid permeabilization of both the outer and inner membrane of E.coli, leading to morphological alterations on the bacterial surface. Binds to bacterial lipopolysaccharides (LPS) with high affinity, and may thereby be involved in immunoregulation through LPS neutralization. May contribute to epididymal innate immunity and protect the sperm against attack by microorganisms. The sequence is that of Defensin beta 118 (DEFB118) from Pan troglodytes (Chimpanzee).